Reading from the N-terminus, the 71-residue chain is Prophage lysis protein S homolog EssD (71 aa).

This sequence belongs to the lambda phage S protein family.

The protein is Prophage lysis protein S homolog EssD (essD) of Escherichia coli (strain K12).